The primary structure comprises 111 residues: Small ubiquitin-related modifier 3 (111 aa).

Positions 16–93 constitute a Ubiquitin-like domain; that stretch reads AHVILKVKSQ…IDACRAMSGG (78 aa). Glycine 93 is covalently cross-linked (Glycyl lysine isopeptide (Gly-Lys) (interchain with K-? in acceptor proteins)).

Belongs to the ubiquitin family. SUMO subfamily. In terms of assembly, interacts with SAE2, SCE1, SIZ1 and MMS21. Covalently attached to a number of proteins. Interacts with NPR1; this interaction promotes NPR1 phosphorylation and triggers its sumoylation and subsequent degradation.

It localises to the nucleus. The protein resides in the cytoplasm. Functionally, ubiquitin-like protein which can be covalently attached to target lysines as a monomer. Does not seem to be involved in protein degradation and may function as an antagonist of ubiquitin in the degradation process. Promotes NPR1 sumoylation to activate defense gene expression and regulate its degradation. This chain is Small ubiquitin-related modifier 3, found in Arabidopsis thaliana (Mouse-ear cress).